The chain runs to 419 residues: UDP-N-acetylglucosamine 1-carboxyvinyltransferase (419 aa).

22 to 23 (KN) is a phosphoenolpyruvate binding site. Arg-92 provides a ligand contact to UDP-N-acetyl-alpha-D-glucosamine. The active-site Proton donor is the Cys-116. Cys-116 carries the 2-(S-cysteinyl)pyruvic acid O-phosphothioketal modification. UDP-N-acetyl-alpha-D-glucosamine contacts are provided by residues 121 to 125 (RPIDL), Asp-306, and Ile-328.

Belongs to the EPSP synthase family. MurA subfamily.

Its subcellular location is the cytoplasm. It catalyses the reaction phosphoenolpyruvate + UDP-N-acetyl-alpha-D-glucosamine = UDP-N-acetyl-3-O-(1-carboxyvinyl)-alpha-D-glucosamine + phosphate. Its pathway is cell wall biogenesis; peptidoglycan biosynthesis. Cell wall formation. Adds enolpyruvyl to UDP-N-acetylglucosamine. Target for the antibiotic fosfomycin. This Streptococcus pneumoniae (strain Hungary19A-6) protein is UDP-N-acetylglucosamine 1-carboxyvinyltransferase.